We begin with the raw amino-acid sequence, 396 residues long: Protein Njmu-R1 (396 aa).

The interval 1-78 (MLPSLQESMD…SGDDFSLSLA (78 aa)) is disordered. Residues Ser8 and Ser18 each carry the phosphoserine modification. Over residues 9–24 (MDGDEKELESSEEGGS) the composition is skewed to acidic residues. Over residues 58–67 (GSPSGTNAET) the composition is skewed to polar residues.

As to quaternary structure, component of the complex WDR11 composed of C17orf75, FAM91A1 and WDR11; FAM91A1 and WDR11 are required for proper location of the complex. Interacts with TBC1D23; this interaction may be indirect and recruits TBC1D23 to AP-1-derived vesicles. As to expression, highly expressed in testis and also expressed in fetal testis.

Its subcellular location is the golgi apparatus. The protein resides in the trans-Golgi network. It localises to the cytoplasmic vesicle. As component of the WDR11 complex acts together with TBC1D23 to facilitate the golgin-mediated capture of vesicles generated using AP-1. May have a role in spermatogenesis. The protein is Protein Njmu-R1 (C17orf75) of Homo sapiens (Human).